The following is a 444-amino-acid chain: MVAIKDITARQILDSRGNPTVEVDLLTDGGCFRAAVPSGASTGIYEALELRDKDQTKFMGKGVMKAVENIHKIIKPALIGKDPCDQKGIDKLMVEELDGTKNEWGWCKSKLGANAILAVSMACCRAGAAAKGMPLYKYIATLAGNPTDKMVMPVPFFNVINGGSHAGNKVAMQEFMIAPVGASTIQEAIQIGAEVYQHLKVVIKKKYGLDATNVGDEGGFAPNISGATEALDLLMEAIKVSGHEGKVKIAADVAASEFFLQDDKVYDLDFKTPNNDKSQRKTGEELRNLYKDLCQKYPFVSIEDPFDQDDFHSYAQLTNEVGEKVQIVGDDLLVTNPTRIEKAVQEKACNGLLLKVNQIGTVSESIEACQLAQKNKWGVMVSHRSGETEDSFIADLVVGLRTGQIKTGAPCRSERLCKYNQLMRIEESLGSDCQYAGAGFRHPN.

The substrate site is built by His-165 and Glu-174. Catalysis depends on Glu-217, which acts as the Proton donor. Residues Asp-252, Glu-303, and Asp-330 each coordinate Mg(2+). Substrate-binding residues include Glu-303 and Asp-330. Catalysis depends on Lys-355, which acts as the Proton acceptor. Residues 382–385 (SHRS) and Lys-406 contribute to the substrate site.

Belongs to the enolase family. As to quaternary structure, homodimer. Mg(2+) serves as cofactor.

The protein resides in the cytoplasm. It catalyses the reaction (2R)-2-phosphoglycerate = phosphoenolpyruvate + H2O. It functions in the pathway carbohydrate degradation; glycolysis; pyruvate from D-glyceraldehyde 3-phosphate: step 4/5. The chain is Enolase 2 (ENO2) from Toxoplasma gondii.